Reading from the N-terminus, the 175-residue chain is ATP-dependent protease subunit HslV (175 aa).

Thr-2 is a catalytic residue. Na(+)-binding residues include Gly-157, Cys-160, and Thr-163.

Belongs to the peptidase T1B family. HslV subfamily. In terms of assembly, a double ring-shaped homohexamer of HslV is capped on each side by a ring-shaped HslU homohexamer. The assembly of the HslU/HslV complex is dependent on binding of ATP.

Its subcellular location is the cytoplasm. It carries out the reaction ATP-dependent cleavage of peptide bonds with broad specificity.. Its activity is regulated as follows. Allosterically activated by HslU binding. Protease subunit of a proteasome-like degradation complex believed to be a general protein degrading machinery. This Photobacterium profundum (strain SS9) protein is ATP-dependent protease subunit HslV.